Reading from the N-terminus, the 254-residue chain is UDP-2,3-diacylglucosamine hydrolase (254 aa).

Mn(2+) is bound by residues D8, H10, D41, N79, and H114. 79–80 (NR) contacts substrate. Substrate is bound by residues D122, S160, N164, K167, and H195. H195 and H197 together coordinate Mn(2+).

The protein belongs to the LpxH family. Mn(2+) is required as a cofactor.

The protein resides in the cell inner membrane. It carries out the reaction UDP-2-N,3-O-bis[(3R)-3-hydroxytetradecanoyl]-alpha-D-glucosamine + H2O = 2-N,3-O-bis[(3R)-3-hydroxytetradecanoyl]-alpha-D-glucosaminyl 1-phosphate + UMP + 2 H(+). It participates in glycolipid biosynthesis; lipid IV(A) biosynthesis; lipid IV(A) from (3R)-3-hydroxytetradecanoyl-[acyl-carrier-protein] and UDP-N-acetyl-alpha-D-glucosamine: step 4/6. Hydrolyzes the pyrophosphate bond of UDP-2,3-diacylglucosamine to yield 2,3-diacylglucosamine 1-phosphate (lipid X) and UMP by catalyzing the attack of water at the alpha-P atom. Involved in the biosynthesis of lipid A, a phosphorylated glycolipid that anchors the lipopolysaccharide to the outer membrane of the cell. This is UDP-2,3-diacylglucosamine hydrolase from Aeromonas salmonicida (strain A449).